A 317-amino-acid chain; its full sequence is DNA-directed RNA polymerase subunit alpha (317 aa).

Residues 1 to 230 (MIEIEMEKPK…EHLNLFITLT (230 aa)) are alpha N-terminal domain (alpha-NTD). Residues 247–317 (KEKVLEMTIE…LGLGLRPSDE (71 aa)) form an alpha C-terminal domain (alpha-CTD) region.

The protein belongs to the RNA polymerase alpha chain family. In terms of assembly, homodimer. The RNAP catalytic core consists of 2 alpha, 1 beta, 1 beta' and 1 omega subunit. When a sigma factor is associated with the core the holoenzyme is formed, which can initiate transcription.

It carries out the reaction RNA(n) + a ribonucleoside 5'-triphosphate = RNA(n+1) + diphosphate. DNA-dependent RNA polymerase catalyzes the transcription of DNA into RNA using the four ribonucleoside triphosphates as substrates. This chain is DNA-directed RNA polymerase subunit alpha, found in Alkaliphilus oremlandii (strain OhILAs) (Clostridium oremlandii (strain OhILAs)).